The following is a 392-amino-acid chain: Casein kinase II subunit alpha (392 aa).

The 286-residue stretch at 39–324 folds into the Protein kinase domain; that stretch reads YQLVRKLGRG…AREAMDHPYF (286 aa). Residues 45–53 and Lys-68 contribute to the ATP site; that span reads LGRGKYSEV. Asp-156 (proton acceptor) is an active-site residue. The interval 334–355 is disordered; sequence MGGSNMPSGSSTPVSSASMMSG. Low complexity predominate over residues 337 to 354; that stretch reads SNMPSGSSTPVSSASMMS.

The protein belongs to the protein kinase superfamily. Ser/Thr protein kinase family. CK2 subfamily. Tetramer composed of an alpha chain, an alpha' and two beta chains.

It localises to the nucleus. The catalysed reaction is L-seryl-[protein] + ATP = O-phospho-L-seryl-[protein] + ADP + H(+). It carries out the reaction L-threonyl-[protein] + ATP = O-phospho-L-threonyl-[protein] + ADP + H(+). Catalytic subunit of a constitutively active serine/threonine-protein kinase complex that phosphorylates a large number of substrates containing acidic residues C-terminal to the phosphorylated serine or threonine. Regulates numerous cellular processes, such as cell cycle progression, apoptosis and transcription, as well as viral infection. May act as a regulatory node which integrates and coordinates numerous signals leading to an appropriate cellular response. During mitosis, functions as a component of the p53/TP53-dependent spindle assembly checkpoint (SAC) that maintains cyclin-B-CDK1 activity and G2 arrest in response to spindle damage. Can also negatively regulate apoptosis. Phosphorylates the caspases CASP9 and CASP2 and the apoptotic regulator NOL3. Phosphorylation protects CASP9 from cleavage and activation by CASP8, and inhibits the dimerization of CASP2 and activation of CASP8. Plays an important role in the circadian clock function by phosphorylating BMAL1. In Xenopus laevis (African clawed frog), this protein is Casein kinase II subunit alpha (csnk2a1).